The sequence spans 274 residues: MMHVFEVYPKVNIFLKILHKEGAYHKLISRMCLVKDKLKDIISVKSALSFSLKGDFDCPLEENSLFKALQILKNFLKSKNFSHSAIKSLDTLAIEVEKNIPTQAGLGGGSADAGGLLYHLNHIFDWRLSLEELYSMGSLVGADTNFFISQHKSANATSYGEVIENFEEEPLENRLEIYAPNHVFCSTKAIYQAYKPETCFSQTKEWLKKPSLECLKTCDRSELNDLLKPALLTNQALRDIESELGKEWFFSGSGSAFFRLKNTQKGANETHCQQ.

Residue lysine 10 is part of the active site. 101-111 (PTQAGLGGGSA) is an ATP binding site. Aspartate 143 is a catalytic residue.

Belongs to the GHMP kinase family. IspE subfamily.

It carries out the reaction 4-CDP-2-C-methyl-D-erythritol + ATP = 4-CDP-2-C-methyl-D-erythritol 2-phosphate + ADP + H(+). It functions in the pathway isoprenoid biosynthesis; isopentenyl diphosphate biosynthesis via DXP pathway; isopentenyl diphosphate from 1-deoxy-D-xylulose 5-phosphate: step 3/6. Catalyzes the phosphorylation of the position 2 hydroxy group of 4-diphosphocytidyl-2C-methyl-D-erythritol. This chain is 4-diphosphocytidyl-2-C-methyl-D-erythritol kinase, found in Helicobacter pylori (strain HPAG1).